The following is a 278-amino-acid chain: Large ribosomal subunit protein uL2c (278 aa).

Residues glycine 222–isoleucine 241 are disordered.

The protein belongs to the universal ribosomal protein uL2 family. In terms of assembly, part of the 50S ribosomal subunit.

It is found in the plastid. The protein resides in the chloroplast. The protein is Large ribosomal subunit protein uL2c (rpl2) of Tupiella akineta (Green alga).